We begin with the raw amino-acid sequence, 172 residues long: Methylated-DNA--protein-cysteine methyltransferase (172 aa).

Cysteine 142 acts as the Nucleophile; methyl group acceptor in catalysis.

Belongs to the MGMT family.

Its subcellular location is the cytoplasm. It carries out the reaction a 6-O-methyl-2'-deoxyguanosine in DNA + L-cysteinyl-[protein] = S-methyl-L-cysteinyl-[protein] + a 2'-deoxyguanosine in DNA. It catalyses the reaction a 4-O-methyl-thymidine in DNA + L-cysteinyl-[protein] = a thymidine in DNA + S-methyl-L-cysteinyl-[protein]. Involved in the cellular defense against the biological effects of O6-methylguanine (O6-MeG) and O4-methylthymine (O4-MeT) in DNA. Repairs the methylated nucleobase in DNA by stoichiometrically transferring the methyl group to a cysteine residue in the enzyme. This is a suicide reaction: the enzyme is irreversibly inactivated. The polypeptide is Methylated-DNA--protein-cysteine methyltransferase (Pyrococcus horikoshii (strain ATCC 700860 / DSM 12428 / JCM 9974 / NBRC 100139 / OT-3)).